The following is a 130-amino-acid chain: ATP synthase epsilon chain (130 aa).

This sequence belongs to the ATPase epsilon chain family. In terms of assembly, F-type ATPases have 2 components, CF(1) - the catalytic core - and CF(0) - the membrane proton channel. CF(1) has five subunits: alpha(3), beta(3), gamma(1), delta(1), epsilon(1). CF(0) has three main subunits: a, b and c.

The protein localises to the cell inner membrane. Its function is as follows. Produces ATP from ADP in the presence of a proton gradient across the membrane. The protein is ATP synthase epsilon chain (atpC) of Fuscovulum blasticum (Rhodobacter blasticus).